Consider the following 453-residue polypeptide: Chromosomal replication initiator protein DnaA (453 aa).

The segment at 1–71 (MSEKEIWEKV…QAILFDVVGY (71 aa)) is domain I, interacts with DnaA modulators. Residues 71–114 (YEVKPHFITTEELANYSNNETATPKEATKPSTETTEDNHVLGRE) are domain II. Residues 115-331 (QFNAHNTFDT…GALTRLLAYS (217 aa)) form a domain III, AAA+ region region. ATP is bound by residues Gly159, Gly161, Lys162, and Thr163. The segment at 332-453 (QLLGKPITTE…ENLEKEIRNV (122 aa)) is domain IV, binds dsDNA.

The protein belongs to the DnaA family. In terms of assembly, oligomerizes as a right-handed, spiral filament on DNA at oriC.

It localises to the cytoplasm. Functionally, plays an essential role in the initiation and regulation of chromosomal replication. ATP-DnaA binds to the origin of replication (oriC) to initiate formation of the DNA replication initiation complex once per cell cycle. Binds the DnaA box (a 9 base pair repeat at the origin) and separates the double-stranded (ds)DNA. Forms a right-handed helical filament on oriC DNA; dsDNA binds to the exterior of the filament while single-stranded (ss)DNA is stabiized in the filament's interior. The ATP-DnaA-oriC complex binds and stabilizes one strand of the AT-rich DNA unwinding element (DUE), permitting loading of DNA polymerase. After initiation quickly degrades to an ADP-DnaA complex that is not apt for DNA replication. Binds acidic phospholipids. This is Chromosomal replication initiator protein DnaA from Staphylococcus aureus (strain MRSA252).